We begin with the raw amino-acid sequence, 319 residues long: Sulfate adenylyltransferase subunit 2 (319 aa).

It belongs to the PAPS reductase family. CysD subfamily. In terms of assembly, heterodimer composed of CysD, the smaller subunit, and CysN.

It catalyses the reaction sulfate + ATP + H(+) = adenosine 5'-phosphosulfate + diphosphate. The protein operates within sulfur metabolism; hydrogen sulfide biosynthesis; sulfite from sulfate: step 1/3. Functionally, with CysN forms the ATP sulfurylase (ATPS) that catalyzes the adenylation of sulfate producing adenosine 5'-phosphosulfate (APS) and diphosphate, the first enzymatic step in sulfur assimilation pathway. APS synthesis involves the formation of a high-energy phosphoric-sulfuric acid anhydride bond driven by GTP hydrolysis by CysN coupled to ATP hydrolysis by CysD. The chain is Sulfate adenylyltransferase subunit 2 from Methylobacterium radiotolerans (strain ATCC 27329 / DSM 1819 / JCM 2831 / NBRC 15690 / NCIMB 10815 / 0-1).